Here is a 487-residue protein sequence, read N- to C-terminus: MKYKDLRDFIAKLEAEGELKRITVEVDPYLEMTEICDRVLHAGGPALLFERPKGASMPVLGNLFGTPRRVAQGMGEDSVAALREVGKLLAFLKEPDPPRGMKEAWRALPIFKKVLDMAPKIVRSAPCQEVILEGSQVDLSQIPIQTCWPGDIAPLITWGLVVTKGPYKERQNMGIYRQQVLGPNRVIMRWLAHRGGALDFQAWQQAHPGKPFPIAVALGADPATILGAVTPVPDTLSEYAFAGLLRGSKTELTRCLGSGLQVPASAEIVLEGYLKPGDEANEGPFGDHTGYYNEVEKFPVFTIERLTHRRHPIYHSTYTGRPPDEPAVLGVALNEVFIPILQKQFPEIVDFYLPPEGCSYRLAVVTMRKQYPGHAKRVMLGVWSFLRQFMYTKFVIVTDEDINARDWKDVIWAMTTRMDPARDCVIIENTPIDYLDFASPVSGLGSKIGFDVTHKWKGETQREWGQPITMDNAVKKRVDEMWDGMGL.

Asparagine 172 is a Mn(2+) binding site. Prenylated FMN-binding positions include 175–177 (IYR), 189–191 (RWL), and 194–195 (RG). Residue glutamate 238 coordinates Mn(2+). Aspartate 287 (proton donor) is an active-site residue.

The protein belongs to the UbiD family. In terms of assembly, homohexamer. Requires prenylated FMN as cofactor. Mn(2+) is required as a cofactor.

The protein resides in the cell membrane. The enzyme catalyses a 4-hydroxy-3-(all-trans-polyprenyl)benzoate + H(+) = a 2-(all-trans-polyprenyl)phenol + CO2. The protein operates within cofactor biosynthesis; ubiquinone biosynthesis. Functionally, catalyzes the decarboxylation of 3-octaprenyl-4-hydroxy benzoate to 2-octaprenylphenol, an intermediate step in ubiquinone biosynthesis. The protein is 3-octaprenyl-4-hydroxybenzoate carboxy-lyase of Nitrosococcus oceani (strain ATCC 19707 / BCRC 17464 / JCM 30415 / NCIMB 11848 / C-107).